We begin with the raw amino-acid sequence, 249 residues long: Phosphate import ATP-binding protein PstB (249 aa).

An ABC transporter domain is found at 5–244; sequence LRIEDLHFWY…PEKDRTEAYV (240 aa). Position 37–44 (37–44) interacts with ATP; sequence GPSGCGKS.

Belongs to the ABC transporter superfamily. Phosphate importer (TC 3.A.1.7) family. The complex is composed of two ATP-binding proteins (PstB), two transmembrane proteins (PstC and PstA) and a solute-binding protein (PstS).

The protein localises to the cell inner membrane. It carries out the reaction phosphate(out) + ATP + H2O = ADP + 2 phosphate(in) + H(+). Its function is as follows. Part of the ABC transporter complex PstSACB involved in phosphate import. Responsible for energy coupling to the transport system. This is Phosphate import ATP-binding protein PstB from Salinibacter ruber (strain DSM 13855 / M31).